Reading from the N-terminus, the 1037-residue chain is Serine/threonine-protein kinase ULK2 (1037 aa).

Residues 9-271 (YCKRDLVGHG…FEAFFSHPFL (263 aa)) form the Protein kinase domain. ATP-binding positions include 15–23 (VGHGAFAVV) and Lys-39. Asp-131 functions as the Proton acceptor in the catalytic mechanism. Residues 319 to 350 (ENLSSPPLGPPNYLQVSKDSASNSSKNSSCDT) are disordered. Over residues 335–348 (SKDSASNSSKNSSC) the composition is skewed to low complexity. A Phosphoserine modification is found at Ser-430. 4 disordered regions span residues 452-480 (CSPV…PSPL), 494-515 (GHPQ…PQTQ), 540-594 (QKLR…KTPL), and 626-697 (HGPA…NTER). Polar residues-rich tracts occupy residues 506–515 (SSGSPVPQTQ) and 571–585 (LGTS…SPRN). The segment covering 632 to 643 (QSKDGNDPRECS) has biased composition (basic and acidic residues). Residues 658–678 (QQQSKAVFGRSVSTGKLSEQQ) show a composition bias toward polar residues. Ser-772 and Ser-781 each carry phosphoserine. The CTD-like region stretch occupies residues 813–1037 (ELPEETLMER…SALCCSTATV (225 aa)).

Belongs to the protein kinase superfamily. Ser/Thr protein kinase family. APG1/unc-51/ULK1 subfamily. As to quaternary structure, component of a complex consisting of ATG13/KIAA0652, ULK1 and RB1CC1/FIP200. Interacts (via C-terminus) with ATG13/KIAA0652. Associates with the mammalian target of rapamycin complex 1 (mTORC1) through an interaction with RPTOR. Interacts with SYNGAP1. In terms of processing, autophosphorylated. In response to nutrient limitation, probably phosphorylated and activated by AMPK, leading to activate autophagy. In terms of tissue distribution, widely expressed.

It is found in the cytoplasmic vesicle membrane. It catalyses the reaction L-seryl-[protein] + ATP = O-phospho-L-seryl-[protein] + ADP + H(+). The catalysed reaction is L-threonyl-[protein] + ATP = O-phospho-L-threonyl-[protein] + ADP + H(+). Serine/threonine-protein kinase involved in autophagy in response to starvation. Acts upstream of phosphatidylinositol 3-kinase PIK3C3 to regulate the formation of autophagophores, the precursors of autophagosomes. Part of regulatory feedback loops in autophagy: acts both as a downstream effector and a negative regulator of mammalian target of rapamycin complex 1 (mTORC1) via interaction with RPTOR. Activated via phosphorylation by AMPK, also acts as a negative regulator of AMPK through phosphorylation of the AMPK subunits PRKAA1, PRKAB2 and PRKAG1. May phosphorylate ATG13/KIAA0652, FRS2, FRS3 and RPTOR; however such data need additional evidences. Not involved in ammonia-induced autophagy or in autophagic response of cerebellar granule neurons (CGN) to low potassium concentration. Plays a role early in neuronal differentiation and is required for granule cell axon formation: may govern axon formation via Ras-like GTPase signaling and through regulation of the Rab5-mediated endocytic pathways within developing axons. The sequence is that of Serine/threonine-protein kinase ULK2 (Ulk2) from Mus musculus (Mouse).